The sequence spans 714 residues: MSKQTFTTTFAGKPLVVEVGQVAKRANGATVVRYGESTVLTAAVMSKKMSTGDFFPLQVNYEEKMYAAGKFPGGWMKREGRPSTDATLTARLIDRPIRPMFAEGFRNEVQVINTVLSYDEDASAPMAAMLGSSLALSISDIPFNGPIAGVQVAYVEGEFIINPDKAQQEASLLELTVAGTKDAINMVESGAKELPEAIMLEALLVGHKAIQELIAFQEEIVAAVGKEKAEVELLQVAADLQAEIIETYNADLQQAIQVEEKKAREAATEAVKERVIAAYEERYAADEEHDRIMRDVAEILEQMEHAEVRRLITEDKVRPDGRRVDEIRPLAAEIDFLPRVHGSGLFTRGQTQALSVLTLAPMGDTQIIDGLEPEYKKRFLHHYNFPQYSVGETGRYGAAGRREIGHGALGERALAQVLPSLEAFPYAIRLVAEVLESNGSSSQASICAGTLALMAAGVPIKAPVAGIAMGLISDGTNYTVLTDIQGLEDHFGDMDFKVAGTRQGITALQMDIKIEGITPQILEEALAQAKKARFEILDLIEATIAEPRPELAPTAPKIDTIKIDVDKIKVVIGKGGETIDKIIAETGVKIDIDEEGNVSIYSSDQDAINRAKEIIASLVREAKVGEVYHAKVVRIEKFGAFVNLFDKTDALVHISEIAWSRTTNVSDVLEIGEEVDVKVIKVDDKGRIDASMKALVPRPPKPEKSEAKKEGKHD.

The Mg(2+) site is built by Asp489 and Asp495. The KH domain maps to 556-615 (PKIDTIKIDVDKIKVVIGKGGETIDKIIAETGVKIDIDEEGNVSIYSSDQDAINRAKEII). The 69-residue stretch at 625–693 (GEVYHAKVVR…DKGRIDASMK (69 aa)) folds into the S1 motif domain. A disordered region spans residues 691–714 (SMKALVPRPPKPEKSEAKKEGKHD). Over residues 700 to 714 (PKPEKSEAKKEGKHD) the composition is skewed to basic and acidic residues.

The protein belongs to the polyribonucleotide nucleotidyltransferase family. It depends on Mg(2+) as a cofactor.

Its subcellular location is the cytoplasm. It catalyses the reaction RNA(n+1) + phosphate = RNA(n) + a ribonucleoside 5'-diphosphate. In terms of biological role, involved in mRNA degradation. Catalyzes the phosphorolysis of single-stranded polyribonucleotides processively in the 3'- to 5'-direction. This is Polyribonucleotide nucleotidyltransferase from Streptococcus equi subsp. equi (strain 4047).